We begin with the raw amino-acid sequence, 422 residues long: Phospho-N-acetylmuramoyl-pentapeptide-transferase (422 aa).

The next 9 helical transmembrane spans lie at 28-48, 71-91, 95-115, 136-156, 211-231, 239-259, 279-299, 313-333, and 399-419; these read LMAV…FINL, VGVP…PCLL, LDNI…SLGF, IIGQ…SPDV, AGWF…SNGA, GMAA…AYVS, LVIY…YNAY, IGGI…IPIL, and KITV…IITL.

The protein belongs to the glycosyltransferase 4 family. MraY subfamily. Requires Mg(2+) as cofactor.

The protein localises to the cell inner membrane. It catalyses the reaction UDP-N-acetyl-alpha-D-muramoyl-L-alanyl-gamma-D-glutamyl-meso-2,6-diaminopimeloyl-D-alanyl-D-alanine + di-trans,octa-cis-undecaprenyl phosphate = di-trans,octa-cis-undecaprenyl diphospho-N-acetyl-alpha-D-muramoyl-L-alanyl-D-glutamyl-meso-2,6-diaminopimeloyl-D-alanyl-D-alanine + UMP. Its pathway is cell wall biogenesis; peptidoglycan biosynthesis. In terms of biological role, catalyzes the initial step of the lipid cycle reactions in the biosynthesis of the cell wall peptidoglycan: transfers peptidoglycan precursor phospho-MurNAc-pentapeptide from UDP-MurNAc-pentapeptide onto the lipid carrier undecaprenyl phosphate, yielding undecaprenyl-pyrophosphoryl-MurNAc-pentapeptide, known as lipid I. The protein is Phospho-N-acetylmuramoyl-pentapeptide-transferase of Bacteroides thetaiotaomicron (strain ATCC 29148 / DSM 2079 / JCM 5827 / CCUG 10774 / NCTC 10582 / VPI-5482 / E50).